The chain runs to 588 residues: Calicin (588 aa).

Residues 28–98 (WDIALTVDHH…FYSGKVVISE (71 aa)) enclose the BTB domain. Ser-149 is subject to Phosphoserine. 6 Kelch repeats span residues 280 to 327 (SVVI…SAGR), 328 to 375 (YIYI…TCGG), 377 to 423 (VYSV…TRGD), 425 to 475 (NLYI…SFHQ), 476 to 525 (DNIL…VGDN), and 526 to 580 (KVFV…LAKL).

In terms of assembly, interacts with CYLC1; the interaction may be relevant for proper acrosome attachment to the nuclear envelope. Expressed in testis and in spermatozoa (at protein level).

The protein resides in the cytoplasm. It localises to the cytoskeleton. The protein localises to the perinuclear theca. Its subcellular location is the calyx. In terms of biological role, required for both nuclear and acrosomal shaping during spermiogenesis. The protein is Calicin (CCIN) of Bos taurus (Bovine).